The sequence spans 728 residues: MITRIPRSSFSANINNTAQTNEHQTLSELFYKELEDKFSGKELATPLLKSFSENCRQNGRHIFSNKDFVIKFSTSVLQADKKEITIINKNENTTLTQTIAPIFEKYLMEILPQRSDTLDKQELNLKSDRKEKEFPRIKLNGQCYFPGRPQNRIVCRHIAAQYINDIYQNVDYKPHQDDYSSAEKFLTHFNKKCKNQTLALVSSRPEGRCVAACGDFGLVMKAYFDKMESNGISVMAAILLVDNHALTVRLRIKNTTEGCTHYVVSVYDPNVTNDKIRIMSESKENIKHYSLMDFMNVDYSLLKWSNDHVINQSVAIIPALPKEQLLMLKGSVDEITPPLSPATMNLLMAIGQNHQLTQLMIQLQKMPELHRTEMLTAYNSINLPGLYLAINYGNADIVETIFNSLSETGYEGLLSKKNLMHILEAKDKNGFSGLFLAISRKDKNVVTSILNALPKLAATHHLDNEQVYKFLSAKNRTSSHVLYHVMANGDADMLKIVLNALPLLIRTCHLTKEQVLDLLKAKDFYGCPGLYLAMQNGHSDIVKVILEALPSLAQEINISASDIVDLLTAKSLARDTGLFMAMQRGHMNVINTIFNALPTLFNTFKFDKKNMKPLLLANNSNEYPGLFSAIQHKQQNVVETVYLALSDHARLFGFTAEDIMDFWQHKAPQKYSAFELAFEFGHRVIAELILNTLNKMAESFGFTDNPRYIAEKNYMEALLKKASPHTVR.

5 ANK repeats span residues 381-410, 429-458, 477-506, 525-554, and 573-602; these read INLPGLYLAINYGNADIVETIFNSLSETGY, NGFSGLFLAISRKDKNVVTSILNALPKLAA, TSSHVLYHVMANGDADMLKIVLNALPLLIR, YGCPGLYLAMQNGHSDIVKVILEALPSLAQ, and ARDTGLFMAMQRGHMNVINTIFNALPTLFN.

Belongs to the Toxin_15 family.

The sequence is that of Ankyrin repeat protein A (arpA) from Escherichia coli (strain K12).